Consider the following 318-residue polypeptide: Protoheme IX farnesyltransferase (318 aa).

The next 9 membrane-spanning stretches (helical) occupy residues 31–51 (IILLLLITTAAGMGLAAQGPL), 55–75 (LAIATLIGGGLAAAAANTLNC), 98–118 (IQPFEAWAFALSLAALSFILL), 125–145 (LAAGLALAGIVFYVVIYTHGL), 153–173 (IVIGGAAGAIPPLVGWAAVTG), 181–201 (ILFAIVCLWTPPHFWALALMI), 206–228 (AAVKVPMLPVVVGNAATAQQILA), 238–260 (LALAWPLGAAGPFYSATALLLGL), and 285–305 (FSIFYLMLLCGAIAMDCLPGA).

This sequence belongs to the UbiA prenyltransferase family. Protoheme IX farnesyltransferase subfamily.

The protein localises to the cell inner membrane. The enzyme catalyses heme b + (2E,6E)-farnesyl diphosphate + H2O = Fe(II)-heme o + diphosphate. It participates in porphyrin-containing compound metabolism; heme O biosynthesis; heme O from protoheme: step 1/1. In terms of biological role, converts heme B (protoheme IX) to heme O by substitution of the vinyl group on carbon 2 of heme B porphyrin ring with a hydroxyethyl farnesyl side group. In Synechococcus elongatus (strain ATCC 33912 / PCC 7942 / FACHB-805) (Anacystis nidulans R2), this protein is Protoheme IX farnesyltransferase.